Reading from the N-terminus, the 181-residue chain is MEMEKRTPVLDGQGINTVLIRLAREIIQRHTNLEPLVIIGVHTRGVHLARRLADTIAEINGRAIPTGDIDITLYRDDWTKIGYSPVVQSTQIGFPIDDKTVILVDDVLFTGRTTRAALDALTDFGRPAKVELAVLVDREGMRELPIQADYVGMFVKTDKAEMVNVLLSETDGEDAVVVNTP.

The PRPP-binding signature appears at valine 101–threonine 113.

Belongs to the purine/pyrimidine phosphoribosyltransferase family. PyrR subfamily.

The enzyme catalyses UMP + diphosphate = 5-phospho-alpha-D-ribose 1-diphosphate + uracil. Its function is as follows. Regulates the transcription of the pyrimidine nucleotide (pyr) operon in response to exogenous pyrimidines. Functionally, also displays a weak uracil phosphoribosyltransferase activity which is not physiologically significant. The polypeptide is Bifunctional protein PyrR (Desulfosudis oleivorans (strain DSM 6200 / JCM 39069 / Hxd3) (Desulfococcus oleovorans)).